The chain runs to 199 residues: Recombination protein RecR (199 aa).

The C4-type zinc-finger motif lies at 56-71 (CRSCFNVAQSELCRIC). The Toprim domain maps to 79–174 (ALICVVEEPK…RVTRLASGLP (96 aa)).

Belongs to the RecR family.

In terms of biological role, may play a role in DNA repair. It seems to be involved in an RecBC-independent recombinational process of DNA repair. It may act with RecF and RecO. The chain is Recombination protein RecR from Frankia alni (strain DSM 45986 / CECT 9034 / ACN14a).